We begin with the raw amino-acid sequence, 89 residues long: Large ribosomal subunit protein bL27 (89 aa).

Positions 1–26 (MAHKKGVGSSRNGRDSESKRLGVKEG) are disordered. Residues 12-26 (NGRDSESKRLGVKEG) show a composition bias toward basic and acidic residues.

Belongs to the bacterial ribosomal protein bL27 family.

The protein is Large ribosomal subunit protein bL27 of Desulforamulus reducens (strain ATCC BAA-1160 / DSM 100696 / MI-1) (Desulfotomaculum reducens).